We begin with the raw amino-acid sequence, 482 residues long: tRNA modification GTPase MnmE (482 aa).

(6S)-5-formyl-5,6,7,8-tetrahydrofolate contacts are provided by arginine 25, glutamate 82, and lysine 135. The region spanning 231–404 (GIKVVIAGQP…LRRVLLDIAG (174 aa)) is the TrmE-type G domain. Asparagine 241 serves as a coordination point for K(+). GTP-binding positions include 241-246 (NAGKSS), 260-266 (TPIAGTT), 285-288 (DTAG), and 385-387 (SAR). Residue serine 245 coordinates Mg(2+). K(+) contacts are provided by threonine 260, isoleucine 262, and threonine 265. Residue threonine 266 coordinates Mg(2+). Lysine 482 serves as a coordination point for (6S)-5-formyl-5,6,7,8-tetrahydrofolate.

This sequence belongs to the TRAFAC class TrmE-Era-EngA-EngB-Septin-like GTPase superfamily. TrmE GTPase family. Homodimer. Heterotetramer of two MnmE and two MnmG subunits. The cofactor is K(+).

The protein localises to the cytoplasm. Exhibits a very high intrinsic GTPase hydrolysis rate. Involved in the addition of a carboxymethylaminomethyl (cmnm) group at the wobble position (U34) of certain tRNAs, forming tRNA-cmnm(5)s(2)U34. The chain is tRNA modification GTPase MnmE from Paracidovorax citrulli (strain AAC00-1) (Acidovorax citrulli).